A 285-amino-acid polypeptide reads, in one-letter code: Formate channel FocA (285 aa).

The Cytoplasmic portion of the chain corresponds to 1-30; sequence MKADNPFDLLLPAAMAKVAEEAGVYKATKH. The helical transmembrane segment at 31–56 threads the bilayer; sequence PLKTFYLAITAGVFISIAFVFYITAT. Residues 57 to 64 lie on the Periplasmic side of the membrane; that stretch reads TGTGTMPF. The helical transmembrane segment at 65-85 threads the bilayer; sequence GMAKLVGGICFSLGLILCVVC. The Cytoplasmic segment spans residues 86 to 112; the sequence is GADLFTSTVLIVVAKASGRITWGQLAK. Residues 113–135 traverse the membrane as a helical segment; sequence NWLNVYFGNLVGALLFVLLMWLS. Over 136–160 the chain is Periplasmic; sequence GEYMTANGQWGLNVLQTADHKVHHT. Residues 161-181 form a helical membrane-spanning segment; it reads FIEAVCLGILANLMVCLAVWM. The Cytoplasmic segment spans residues 182-187; sequence SYSGRS. Residues 188-205 form a helical membrane-spanning segment; the sequence is LMDKAFIMVLPVAMFVAS. At 206-249 the chain is on the periplasmic side; that stretch reads GFEHSIANMFMIPMGIVIRDFASPEFWTAVGSAPENFSHLTVMN. Residues 250-276 traverse the membrane as a helical segment; the sequence is FITDNLIPVTIGNIIGGGLLVGLTYWV. Residues 277–285 are Cytoplasmic-facing; it reads IYLRENDHH.

It belongs to the FNT transporter (TC 1.A.16) family. As to quaternary structure, homopentamer.

It is found in the cell inner membrane. It catalyses the reaction formate(in) = formate(out). In terms of biological role, involved in the bidirectional transport of formate during mixed-acid fermentation. Functions to maintain relatively constant intracellular formate levels during growth, using different mechanisms for efflux and uptake of the anion. Is impermeable to water. This chain is Formate channel FocA, found in Escherichia coli O157:H7.